Consider the following 393-residue polypeptide: Nuclear speckle splicing regulatory protein 1 homolog (393 aa).

Residues 1–49 (MSAPPKRFGLIVKQKEEPKRAPVRVSSVFGDDDDDEAPATATNTSSASV) form a disordered region. A compositionally biased stretch (low complexity) spans 39–48 (ATATNTSSAS). A coiled-coil region spans residues 76–166 (NYDEIQAIKN…YREQEAEEAA (91 aa)). Positions 187–350 (LLNDLARDPT…SLKDKLKPKR (164 aa)) are disordered. The span at 199 to 209 (KQRKMEKKNVR) shows a compositional bias: basic residues. Basic and acidic residues-rich tracts occupy residues 222-236 (EDVK…KSIY), 243-261 (DEKK…EGEL), 317-333 (DHAQ…KSPE), and 341-350 (SLKDKLKPKR).

It belongs to the NSRP1 family.

This chain is Nuclear speckle splicing regulatory protein 1 homolog, found in Caenorhabditis briggsae.